Consider the following 807-residue polypeptide: DNA gyrase subunit B (807 aa).

One can recognise a Toprim domain in the interval 429 to 543 (SELFIVEGDS…KGYLYIAQPP (115 aa)). Mg(2+) is bound by residues glutamate 435, aspartate 508, and aspartate 510.

It belongs to the type II topoisomerase GyrB family. As to quaternary structure, heterotetramer, composed of two GyrA and two GyrB chains. In the heterotetramer, GyrA contains the active site tyrosine that forms a transient covalent intermediate with DNA, while GyrB binds cofactors and catalyzes ATP hydrolysis. The cofactor is Mg(2+). It depends on Mn(2+) as a cofactor. Ca(2+) serves as cofactor.

The protein localises to the cytoplasm. The catalysed reaction is ATP-dependent breakage, passage and rejoining of double-stranded DNA.. In terms of biological role, a type II topoisomerase that negatively supercoils closed circular double-stranded (ds) DNA in an ATP-dependent manner to modulate DNA topology and maintain chromosomes in an underwound state. Negative supercoiling favors strand separation, and DNA replication, transcription, recombination and repair, all of which involve strand separation. Also able to catalyze the interconversion of other topological isomers of dsDNA rings, including catenanes and knotted rings. Type II topoisomerases break and join 2 DNA strands simultaneously in an ATP-dependent manner. This is DNA gyrase subunit B from Rickettsia prowazekii (strain Madrid E).